The chain runs to 80 residues: Acyl carrier protein (80 aa).

The region spanning 3–78 (DDTFSRIQSI…QVLEYIEAES (76 aa)) is the Carrier domain. O-(pantetheine 4'-phosphoryl)serine is present on Ser-38.

Belongs to the acyl carrier protein (ACP) family. Post-translationally, 4'-phosphopantetheine is transferred from CoA to a specific serine of apo-ACP by AcpS. This modification is essential for activity because fatty acids are bound in thioester linkage to the sulfhydryl of the prosthetic group.

The protein resides in the plastid. It localises to the chloroplast. The protein operates within lipid metabolism; fatty acid biosynthesis. Functionally, carrier of the growing fatty acid chain in fatty acid biosynthesis. This chain is Acyl carrier protein, found in Trieres chinensis (Marine centric diatom).